Reading from the N-terminus, the 231-residue chain is ABC transporter ATP-binding protein YtrE (231 aa).

The ABC transporter domain occupies 4 to 231; sequence VQHIDHSFTI…VLKGGITVEV (228 aa). Position 42–49 (42–49) interacts with ATP; that stretch reads GRSGSGKS.

The protein belongs to the ABC transporter superfamily. The complex is composed of 2 ATP-binding proteins (YtrB and YtrE), 2 transmembrane proteins (YtrC and YtrD) and a solute-binding protein (YtrF).

Its subcellular location is the cell membrane. Its function is as follows. Part of the ABC transporter complex YtrBCDEF that plays a role in acetoin utilization during stationary phase and sporulation. This Bacillus subtilis (strain 168) protein is ABC transporter ATP-binding protein YtrE (ytrE).